Reading from the N-terminus, the 309-residue chain is MRKIIVGSRKSKLALTQTNWFIDQLKALGLPYEFEVKEIVTKGDVILDVTLSKVGGKGLFVKEIEHALLTKEIDMAVHSMKDMPAVLPEGLMIGCTPKRVDPRDAFISKNGASFKELAEGAILGTSSLRRSAQLLAARPDLQVKWIRGNIDTRLRKLKEEDYDAIILATAGLQRMGWDNEVITEHLDETLCVPAVGQGALAIECREDDKDLLQLLAHMNDGVTEKTVAAERVFLHKLEGGCQVPIAGYATLTENDAIELTALVGSMDGSVLLKETVVGTDPEKVGLEAADRLIKQGAKELILAANKGQQ.

The residue at position 241 (C241) is an S-(dipyrrolylmethanemethyl)cysteine.

This sequence belongs to the HMBS family. In terms of assembly, monomer. Dipyrromethane serves as cofactor.

The catalysed reaction is 4 porphobilinogen + H2O = hydroxymethylbilane + 4 NH4(+). The protein operates within porphyrin-containing compound metabolism; protoporphyrin-IX biosynthesis; coproporphyrinogen-III from 5-aminolevulinate: step 2/4. Its function is as follows. Tetrapolymerization of the monopyrrole PBG into the hydroxymethylbilane pre-uroporphyrinogen in several discrete steps. This is Porphobilinogen deaminase from Bacillus cereus (strain ATCC 10987 / NRS 248).